Here is an 87-residue protein sequence, read N- to C-terminus: UPF0367 protein SynRCC307_0258 (87 aa).

The protein belongs to the UPF0367 family.

This chain is UPF0367 protein SynRCC307_0258, found in Synechococcus sp. (strain RCC307).